We begin with the raw amino-acid sequence, 535 residues long: Dimethylaniline monooxygenase [N-oxide-forming] 2 (535 aa).

An N-acetylalanine modification is found at Ala-2. FAD-binding positions include 9-13 (GAGVS), Glu-32, 40-41 (VW), and 61-62 (NT). NADP(+) contacts are provided by residues 60–61 (TN) and 195–198 (SGSD). Lys-492 is covalently cross-linked (Glycyl lysine isopeptide (Lys-Gly) (interchain with G-Cter in SUMO)). A helical transmembrane segment spans residues 510 to 530 (FPVSFLLKILGLVAVVVAFFC).

It belongs to the FMO family. FAD is required as a cofactor. It depends on Mg(2+) as a cofactor.

Its subcellular location is the microsome membrane. The protein localises to the endoplasmic reticulum membrane. The enzyme catalyses N,N-dimethylaniline + NADPH + O2 + H(+) = N,N-dimethylaniline N-oxide + NADP(+) + H2O. Functionally, catalyzes the oxidative metabolism of numerous xenobiotics, including mainly therapeutic drugs and insecticides that contain a soft nucleophile, most commonly nitrogen and sulfur and participates to their bioactivation. The polypeptide is Dimethylaniline monooxygenase [N-oxide-forming] 2 (Macaca mulatta (Rhesus macaque)).